Here is an 82-residue protein sequence, read N- to C-terminus: ATP synthase subunit c (82 aa).

2 consecutive transmembrane segments (helical) span residues 7 to 27 and 53 to 73; these read LVAL…CIGI and FLLA…AMLF.

Belongs to the ATPase C chain family. As to quaternary structure, F-type ATPases have 2 components, F(1) - the catalytic core - and F(0) - the membrane proton channel. F(1) has five subunits: alpha(3), beta(3), gamma(1), delta(1), epsilon(1). F(0) has three main subunits: a(1), b(2) and c(10-14). The alpha and beta chains form an alternating ring which encloses part of the gamma chain. F(1) is attached to F(0) by a central stalk formed by the gamma and epsilon chains, while a peripheral stalk is formed by the delta and b chains.

Its subcellular location is the cell inner membrane. Its function is as follows. F(1)F(0) ATP synthase produces ATP from ADP in the presence of a proton or sodium gradient. F-type ATPases consist of two structural domains, F(1) containing the extramembraneous catalytic core and F(0) containing the membrane proton channel, linked together by a central stalk and a peripheral stalk. During catalysis, ATP synthesis in the catalytic domain of F(1) is coupled via a rotary mechanism of the central stalk subunits to proton translocation. In terms of biological role, key component of the F(0) channel; it plays a direct role in translocation across the membrane. A homomeric c-ring of between 10-14 subunits forms the central stalk rotor element with the F(1) delta and epsilon subunits. This Leptothrix cholodnii (strain ATCC 51168 / LMG 8142 / SP-6) (Leptothrix discophora (strain SP-6)) protein is ATP synthase subunit c.